The chain runs to 273 residues: Putative pyruvate, phosphate dikinase regulatory protein (273 aa).

Position 153 to 160 (153 to 160 (GISRTSKT)) interacts with ADP.

It belongs to the pyruvate, phosphate/water dikinase regulatory protein family. PDRP subfamily.

The catalysed reaction is N(tele)-phospho-L-histidyl/L-threonyl-[pyruvate, phosphate dikinase] + ADP = N(tele)-phospho-L-histidyl/O-phospho-L-threonyl-[pyruvate, phosphate dikinase] + AMP + H(+). It catalyses the reaction N(tele)-phospho-L-histidyl/O-phospho-L-threonyl-[pyruvate, phosphate dikinase] + phosphate + H(+) = N(tele)-phospho-L-histidyl/L-threonyl-[pyruvate, phosphate dikinase] + diphosphate. Functionally, bifunctional serine/threonine kinase and phosphorylase involved in the regulation of the pyruvate, phosphate dikinase (PPDK) by catalyzing its phosphorylation/dephosphorylation. This is Putative pyruvate, phosphate dikinase regulatory protein from Agrobacterium fabrum (strain C58 / ATCC 33970) (Agrobacterium tumefaciens (strain C58)).